The primary structure comprises 360 residues: Methionine import ATP-binding protein MetN (360 aa).

Residues 1–22 are disordered; it reads MSHTASTPTPEEYSAQQPSTQG. An ABC transporter domain is found at 25–265; that stretch reads VEFRGITKVF…PQTQVAQKFV (241 aa). An ATP-binding site is contributed by 62-69; that stretch reads GYSGAGKS.

Belongs to the ABC transporter superfamily. Methionine importer (TC 3.A.1.24) family. The complex is composed of two ATP-binding proteins (MetN), two transmembrane proteins (MetI) and a solute-binding protein (MetQ).

The protein localises to the cell membrane. The enzyme catalyses L-methionine(out) + ATP + H2O = L-methionine(in) + ADP + phosphate + H(+). It catalyses the reaction D-methionine(out) + ATP + H2O = D-methionine(in) + ADP + phosphate + H(+). Functionally, part of the ABC transporter complex MetNIQ involved in methionine import. Responsible for energy coupling to the transport system. This chain is Methionine import ATP-binding protein MetN, found in Corynebacterium glutamicum (strain ATCC 13032 / DSM 20300 / JCM 1318 / BCRC 11384 / CCUG 27702 / LMG 3730 / NBRC 12168 / NCIMB 10025 / NRRL B-2784 / 534).